The following is a 612-amino-acid chain: Elongation factor 4 (612 aa).

Residues Lys-11–Asp-193 form the tr-type G domain. GTP-binding positions include Asp-23–Thr-28 and Asn-140–Asp-143.

Belongs to the TRAFAC class translation factor GTPase superfamily. Classic translation factor GTPase family. LepA subfamily.

The protein resides in the cell membrane. The enzyme catalyses GTP + H2O = GDP + phosphate + H(+). Functionally, required for accurate and efficient protein synthesis under certain stress conditions. May act as a fidelity factor of the translation reaction, by catalyzing a one-codon backward translocation of tRNAs on improperly translocated ribosomes. Back-translocation proceeds from a post-translocation (POST) complex to a pre-translocation (PRE) complex, thus giving elongation factor G a second chance to translocate the tRNAs correctly. Binds to ribosomes in a GTP-dependent manner. This Lactobacillus johnsonii (strain CNCM I-12250 / La1 / NCC 533) protein is Elongation factor 4.